Consider the following 576-residue polypeptide: POU domain, class 6, transcription factor 1 (576 aa).

Residues 65–88 are disordered; sequence PAEAGSCDPDHSAEATVAARSPSE. A POU-specific domain is found at 414 to 488; sequence EDGINLEEIR…VLEKWLMEAE (75 aa). The segment at residues 509 to 568 is a DNA-binding region (homeobox); it reads KRKRRTSFTPQAIEALNAYFEKNPLPTGQEITEIAKELNYDREVVRVWFCNRRQTLKNTS.

The protein belongs to the POU transcription factor family. Class-6 subfamily. As to expression, isoform C1 and isoform C2 are found in the brain, while isoform C7 is found in the testis.

The protein resides in the nucleus. In terms of biological role, transcription factor that binds preferentially to a variant of the octamer motif (5'-ATGATAAT-3'). This Mus musculus (Mouse) protein is POU domain, class 6, transcription factor 1 (Pou6f1).